Here is a 421-residue protein sequence, read N- to C-terminus: Serine protease HTRA2, mitochondrial (421 aa).

The chain crosses the membrane as a helical span at residues 63-81; it reads VIRFFVPFSLGALASTMVA. Residues 74–77 carry the IAP-binding motif; the sequence is ALAS. The segment at 138-301 is serine protease; it reads SNGSGFVIEQ…IPIDYVKVFL (164 aa). Catalysis depends on charge relay system residues His-156, Asp-188, and Ser-265. Residues 324–409 form the PDZ domain; the sequence is MGITMLTLTP…ELDIVILRGV (86 aa).

It belongs to the peptidase S1C family. In terms of assembly, interacts with th/DIAP1 (via BIR 2 domain).

It is found in the mitochondrion intermembrane space. Its subcellular location is the mitochondrion membrane. The catalysed reaction is Cleavage of non-polar aliphatic amino-acids at the P1 position, with a preference for Val, Ile and Met. At the P2 and P3 positions, Arg is selected most strongly with a secondary preference for other hydrophilic residues.. Its function is as follows. Serine protease that shows proteolytic activity against a non-specific substrate beta-casein. Promotes or induces cell death either by direct binding to and inhibition of BIRC proteins (also called inhibitor of apoptosis proteins, IAPs), leading to an increase in caspase activity, or by a BIRC inhibition-independent, caspase-independent and serine protease activity-dependent mechanism. Can antagonize antiapoptotic activity of th/Diap1 by directly inducing the degradation of th/Diap1. This Drosophila virilis (Fruit fly) protein is Serine protease HTRA2, mitochondrial.